The sequence spans 366 residues: Isopropyl malate dehydrogenase htyC (366 aa).

71–73 (VGG) is an NADP(+) binding site. Positions 91 and 130 each coordinate substrate. 3 residues coordinate Mg(2+): Asp-221, Asp-246, and Asp-250. NADP(+) is bound at residue 277–282 (GCVHGI).

Belongs to the isocitrate and isopropylmalate dehydrogenases family. As to quaternary structure, homodimer. It depends on Mg(2+) as a cofactor. Requires Mn(2+) as cofactor.

It catalyses the reaction (2R,3S)-3-isopropylmalate + NAD(+) = 4-methyl-2-oxopentanoate + CO2 + NADH. It functions in the pathway antifungal biosynthesis. Its function is as follows. Isopropyl malate dehydrogenase; part of the gene cluster that mediates the de novo generation of L-homotyrosine from acetyl-CoA and 4-hydroxyphenyl-pyruvate. L-homotyrosine is a building block of echinocandin B, a fungal lipidated cyclic hexapeptide that acts as an antifungal agent. L-homotyrosine 4-hydroxyphenyl-pyruvate first undergoes an aldol-type condensation by htyA with the C-2 of acetyl-CoA followed by the release of CoA to form 2-(4-hydroxybenzyl)-malate. This is followed by isomerization of 2-(4-hydroxy-benzyl)-malate to 3-(4-hydroxybenzyl)-malate by htyD. Thereafter, 3-(4-hydroxybenzyl)-malate undergoes decarboxylation and oxidation to form 2-oxo-4-(4-hydroxybenzyl)butanoic acid, coupled to reduction of NAD(+) to NADH by htyC. The product then undergoes transamination catalyzed by htyB to form L-homotyrosine. This is Isopropyl malate dehydrogenase htyC from Aspergillus rugulosus (Emericella rugulosa).